A 369-amino-acid polypeptide reads, in one-letter code: Choline-phosphate cytidylyltransferase B (369 aa).

The segment at 1–27 (MPVVTTDAESETGIPKSLSNEPPSETM) is disordered. Residues Ile-84, Phe-85, His-92, and Lys-122 each coordinate CTP. Phosphocholine is bound by residues Lys-122 and Trp-151. CTP is bound by residues His-168, Asp-169, Tyr-173, Gln-195, Arg-196, Thr-197, and Ile-200. Positions 309–369 (RMLQALSPKQ…SMSEGDEDEK (61 aa)) are disordered. A phosphoserine mark is found at Ser-315, Ser-319, Ser-322, Ser-323, Ser-329, Ser-331, and Ser-335. A compositionally biased stretch (low complexity) spans 319–339 (SPVSSPTRSRSPSRSPSPTFS). Residue Thr-345 is modified to Phosphothreonine. Phosphoserine is present on residues Ser-346, Ser-349, Ser-350, Ser-355, Ser-360, and Ser-362. The segment covering 351 to 362 (PKAASASISSMS) has biased composition (low complexity).

This sequence belongs to the cytidylyltransferase family. As to quaternary structure, homodimer. Phosphorylated. In terms of processing, extensively phosphorylated. As to expression, highly expressed in testis, placenta, brain, ovary, liver and fetal lung. Expressed in brain, liver and fetal lung.

The protein localises to the cytoplasm. The protein resides in the endoplasmic reticulum. It carries out the reaction phosphocholine + CTP + H(+) = CDP-choline + diphosphate. The protein operates within phospholipid metabolism; phosphatidylcholine biosynthesis; phosphatidylcholine from phosphocholine: step 1/2. Functionally, catalyzes the key rate-limiting step in the CDP-choline pathway for phosphatidylcholine biosynthesis. The chain is Choline-phosphate cytidylyltransferase B (PCYT1B) from Homo sapiens (Human).